Reading from the N-terminus, the 410-residue chain is Multifunctional CCA protein (410 aa).

Residues Gly-8 and Arg-11 each contribute to the ATP site. CTP-binding residues include Gly-8 and Arg-11. 2 residues coordinate Mg(2+): Glu-21 and Asp-23. Residues Arg-91, Arg-137, and Arg-140 each coordinate ATP. The CTP site is built by Arg-91, Arg-137, and Arg-140. In terms of domain architecture, HD spans 228 to 329 (TGVHVLSVLR…LELLQRFDVF (102 aa)).

This sequence belongs to the tRNA nucleotidyltransferase/poly(A) polymerase family. Bacterial CCA-adding enzyme type 1 subfamily. In terms of assembly, monomer. Can also form homodimers and oligomers. Requires Mg(2+) as cofactor. The cofactor is Ni(2+).

It carries out the reaction a tRNA precursor + 2 CTP + ATP = a tRNA with a 3' CCA end + 3 diphosphate. The catalysed reaction is a tRNA with a 3' CCA end + 2 CTP + ATP = a tRNA with a 3' CCACCA end + 3 diphosphate. In terms of biological role, catalyzes the addition and repair of the essential 3'-terminal CCA sequence in tRNAs without using a nucleic acid template. Adds these three nucleotides in the order of C, C, and A to the tRNA nucleotide-73, using CTP and ATP as substrates and producing inorganic pyrophosphate. tRNA 3'-terminal CCA addition is required both for tRNA processing and repair. Also involved in tRNA surveillance by mediating tandem CCA addition to generate a CCACCA at the 3' terminus of unstable tRNAs. While stable tRNAs receive only 3'-terminal CCA, unstable tRNAs are marked with CCACCA and rapidly degraded. This chain is Multifunctional CCA protein, found in Ectopseudomonas mendocina (strain ymp) (Pseudomonas mendocina).